Here is a 45-residue protein sequence, read N- to C-terminus: Photosystem II reaction center protein K (45 aa).

A propeptide spanning residues 1–8 (MTQIFLIG) is cleaved from the precursor. Residues 20–40 (IVDVLPIIPVLFLLLAFVWQA) form a helical membrane-spanning segment.

This sequence belongs to the PsbK family. In terms of assembly, PSII is composed of 1 copy each of membrane proteins PsbA, PsbB, PsbC, PsbD, PsbE, PsbF, PsbH, PsbI, PsbJ, PsbK, PsbL, PsbM, PsbT, PsbX, PsbY, PsbZ, Psb30/Ycf12, at least 3 peripheral proteins of the oxygen-evolving complex and a large number of cofactors. It forms dimeric complexes.

Its subcellular location is the plastid. The protein localises to the chloroplast thylakoid membrane. In terms of biological role, one of the components of the core complex of photosystem II (PSII). PSII is a light-driven water:plastoquinone oxidoreductase that uses light energy to abstract electrons from H(2)O, generating O(2) and a proton gradient subsequently used for ATP formation. It consists of a core antenna complex that captures photons, and an electron transfer chain that converts photonic excitation into a charge separation. The sequence is that of Photosystem II reaction center protein K from Ostreococcus tauri.